Consider the following 939-residue polypeptide: U3 small nucleolar RNA-associated protein 21 (939 aa).

Serine 2 carries the N-acetylserine modification. WD repeat units follow at residues 40-71 (ATGT…LLFV), 81-111 (VALS…HLLE), 119-158 (EHLC…TKLT), 168-201 (VSLQ…LVFT), 208-245 (QITT…RTIK), 252-287 (SSLS…IHVL), 295-347 (YGGV…RSRG), 354-388 (SYIA…QSQE), 415-454 (VALA…GRWT), 463-497 (VKSV…LRKK), 505-541 (VTGI…GKLK), 546-581 (ITAM…VRQL), 583-624 (GHSN…DGII), and 626-664 (DNVA…KTVS). The residue at position 772 (serine 772) is a Phosphoserine.

Interacts with snoRNA U3. Interacts with MPP10. Interacts (via WD repeats) with UTP18. Component of the ribosomal small subunit (SSU) processome composed of at least 40 protein subunits and snoRNA U3.

The protein localises to the nucleus. The protein resides in the nucleolus. Involved in nucleolar processing of pre-18S ribosomal RNA and ribosome assembly. This is U3 small nucleolar RNA-associated protein 21 (UTP21) from Saccharomyces cerevisiae (strain ATCC 204508 / S288c) (Baker's yeast).